The sequence spans 347 residues: Peptidoglycan recognition protein 3 (347 aa).

The first 26 residues, 1–26 (MLVSWDHPKMLPRLLGFLALSLLACG), serve as a signal peptide directing secretion. 2 consecutive N-acetylmuramoyl-L-alanine amidase domains span residues 77–185 (LQSQ…KACP) and 206–328 (PAKF…VSNI). N120 carries an N-linked (GlcNAc...) asparagine glycan. Cystine bridges form between C184-C306, C200-C244, and C220-C226. Peptidoglycan is bound by residues H237 and Y248. Residues 270 to 275 (HTYGYN) form an interaction with murein region.

Belongs to the N-acetylmuramoyl-L-alanine amidase 2 family. As to quaternary structure, monomer. Homodimer; disulfide-linked. Heterodimer with PGLYRP4; disulfide-linked. As to expression, detected in lung, spleen and stomach, and at low levels in eye, heart, thymus and testis.

It localises to the secreted. Functionally, pattern receptor that binds to murein peptidoglycans (PGN) of Gram-positive bacteria. Has bactericidal activity towards Gram-positive bacteria. May kill Gram-positive bacteria by interfering with peptidoglycan biosynthesis. Also binds to Gram-negative bacteria, and has bacteriostatic activity towards Gram-negative bacteria. Plays a role in innate immunity. This is Peptidoglycan recognition protein 3 (Pglyrp3) from Mus musculus (Mouse).